The sequence spans 167 residues: Ribosome maturation factor RimM (167 aa).

The PRC barrel domain maps to 94–165; it reads EHEYYYSDII…TIKITPMEGL (72 aa).

It belongs to the RimM family. In terms of assembly, binds ribosomal protein uS19.

It localises to the cytoplasm. An accessory protein needed during the final step in the assembly of 30S ribosomal subunit, possibly for assembly of the head region. Essential for efficient processing of 16S rRNA. May be needed both before and after RbfA during the maturation of 16S rRNA. It has affinity for free ribosomal 30S subunits but not for 70S ribosomes. The sequence is that of Ribosome maturation factor RimM from Staphylococcus epidermidis (strain ATCC 12228 / FDA PCI 1200).